Consider the following 106-residue polypeptide: Urease subunit beta (106 aa).

The protein belongs to the urease beta subunit family. As to quaternary structure, heterotrimer of UreA (gamma), UreB (beta) and UreC (alpha) subunits. Three heterotrimers associate to form the active enzyme.

It is found in the cytoplasm. It catalyses the reaction urea + 2 H2O + H(+) = hydrogencarbonate + 2 NH4(+). Its pathway is nitrogen metabolism; urea degradation; CO(2) and NH(3) from urea (urease route): step 1/1. The polypeptide is Urease subunit beta (Prochlorococcus marinus (strain MIT 9301)).